Here is a 158-residue protein sequence, read N- to C-terminus: SsrA-binding protein (158 aa).

It belongs to the SmpB family.

Its subcellular location is the cytoplasm. Its function is as follows. Required for rescue of stalled ribosomes mediated by trans-translation. Binds to transfer-messenger RNA (tmRNA), required for stable association of tmRNA with ribosomes. tmRNA and SmpB together mimic tRNA shape, replacing the anticodon stem-loop with SmpB. tmRNA is encoded by the ssrA gene; the 2 termini fold to resemble tRNA(Ala) and it encodes a 'tag peptide', a short internal open reading frame. During trans-translation Ala-aminoacylated tmRNA acts like a tRNA, entering the A-site of stalled ribosomes, displacing the stalled mRNA. The ribosome then switches to translate the ORF on the tmRNA; the nascent peptide is terminated with the 'tag peptide' encoded by the tmRNA and targeted for degradation. The ribosome is freed to recommence translation, which seems to be the essential function of trans-translation. The polypeptide is SsrA-binding protein (Buchnera aphidicola subsp. Baizongia pistaciae (strain Bp)).